We begin with the raw amino-acid sequence, 101 residues long: Small ribosomal subunit protein uS14 (101 aa).

This sequence belongs to the universal ribosomal protein uS14 family. In terms of assembly, part of the 30S ribosomal subunit. Contacts proteins S3 and S10.

Its function is as follows. Binds 16S rRNA, required for the assembly of 30S particles and may also be responsible for determining the conformation of the 16S rRNA at the A site. The protein is Small ribosomal subunit protein uS14 of Psychrobacter arcticus (strain DSM 17307 / VKM B-2377 / 273-4).